Consider the following 453-residue polypeptide: tRNA modification GTPase MnmE (453 aa).

Positions 22, 79, and 119 each coordinate (6S)-5-formyl-5,6,7,8-tetrahydrofolate. Residues 215–376 (GMKVVIAGRP…LRQHLKECMG (162 aa)) enclose the TrmE-type G domain. Asn-225 lines the K(+) pocket. GTP is bound by residues 225–230 (NAGKSS), 244–250 (TDIAGTT), 269–272 (DTAG), and 334–337 (NKAD). Ser-229 provides a ligand contact to Mg(2+). 3 residues coordinate K(+): Thr-244, Ile-246, and Thr-249. Thr-250 serves as a coordination point for Mg(2+). Residue Lys-453 participates in (6S)-5-formyl-5,6,7,8-tetrahydrofolate binding.

Belongs to the TRAFAC class TrmE-Era-EngA-EngB-Septin-like GTPase superfamily. TrmE GTPase family. Homodimer. Heterotetramer of two MnmE and two MnmG subunits. K(+) serves as cofactor.

The protein localises to the cytoplasm. Exhibits a very high intrinsic GTPase hydrolysis rate. Involved in the addition of a carboxymethylaminomethyl (cmnm) group at the wobble position (U34) of certain tRNAs, forming tRNA-cmnm(5)s(2)U34. The protein is tRNA modification GTPase MnmE of Vibrio cholerae serotype O1 (strain ATCC 39315 / El Tor Inaba N16961).